The following is a 118-amino-acid chain: Large ribosomal subunit protein bL21c (118 aa).

It belongs to the bacterial ribosomal protein bL21 family. In terms of assembly, part of the 50S ribosomal subunit.

It localises to the plastid. Its subcellular location is the chloroplast. Functionally, this protein binds to 23S rRNA. In Psilotum nudum (Whisk fern), this protein is Large ribosomal subunit protein bL21c.